Consider the following 225-residue polypeptide: Transcriptional regulatory protein CssR (225 aa).

The 114-residue stretch at 4–117 (TIYLVEDEDN…ELIIRVQKLL (114 aa)) folds into the Response regulatory domain. Asp-52 carries the 4-aspartylphosphate modification. Positions 129–224 (KNEIAVSSYR…IYGFGYRMMS (96 aa)) form a DNA-binding region, ompR/PhoB-type.

Post-translationally, phosphorylated by CssS.

It localises to the cytoplasm. In terms of biological role, member of the two-component regulatory system CssS/CssR required to control the cellular response to secretion stress. The protein is Transcriptional regulatory protein CssR (cssR) of Bacillus subtilis (strain 168).